A 364-amino-acid polypeptide reads, in one-letter code: Sorbitol dehydrogenase (364 aa).

Residue Cys54 participates in Zn(2+) binding. Tyr60 serves as a coordination point for substrate. Residues His79 and Glu80 each contribute to the Zn(2+) site. Glu165 is a binding site for substrate. Residues Ile193, Asp213, Arg218, 284–286 (VGM), and 308–310 (VFR) contribute to the NAD(+) site. Substrate-binding residues include Arg310 and Tyr311.

Belongs to the zinc-containing alcohol dehydrogenase family. As to quaternary structure, homotetramer. It depends on Zn(2+) as a cofactor. As to expression, mostly expressed in dry seeds and leaves, and, to a lower extent, in roots, stems, flowers and siliques (at protein level).

Its subcellular location is the mitochondrion membrane. It localises to the cell membrane. It is found in the cytoplasm. The protein localises to the cytosol. The enzyme catalyses keto-D-fructose + NADH + H(+) = D-sorbitol + NAD(+). The catalysed reaction is ribitol + NAD(+) = D-ribulose + NADH + H(+). It carries out the reaction xylitol + NAD(+) = D-xylulose + NADH + H(+). In terms of biological role, polyol dehydrogenase that catalyzes the NAD(+)-dependent oxidation of various sugar alcohols. Is mostly active with D-sorbitol (D-glucitol), ribitol and xylitol as substrates, leading to the C2-oxidized products D-fructose, D-ribulose and D-xylulose, respectively. To a lesser extent, can also oxidize arabitol, mannitol, lactitol and maltitol in vitro. Is required for sorbitol metabolism. Cannot use NADP(+) as the electron acceptor. In Arabidopsis thaliana (Mouse-ear cress), this protein is Sorbitol dehydrogenase (SDH).